A 205-amino-acid chain; its full sequence is MIQGIIGKKIGMTQIFQEDGKAQPVTLVEAGPCVVVQVKTEKQDGYEAVQLGYGKAKHITSAVKGQCRGFGEFKVLREVDVDDIAAVSVGDQITVSDFKDGEKIDASGVSRGRGFSGVVKRWHFAGGPKTHGQSDRHRAPGSIGSTTTPGRIYKGKHMAGHMGNEAVTIRNLVVLKTDAEKNLLMVKGAIPGGKNTIILIKKTGK.

Residues 126–150 (GGPKTHGQSDRHRAPGSIGSTTTPG) form a disordered region.

The protein belongs to the universal ribosomal protein uL3 family. As to quaternary structure, part of the 50S ribosomal subunit. Forms a cluster with proteins L14 and L19.

Its function is as follows. One of the primary rRNA binding proteins, it binds directly near the 3'-end of the 23S rRNA, where it nucleates assembly of the 50S subunit. The polypeptide is Large ribosomal subunit protein uL3 (Dehalococcoides mccartyi (strain ATCC BAA-2100 / JCM 16839 / KCTC 5957 / BAV1)).